Consider the following 342-residue polypeptide: Isopentenyl-diphosphate delta-isomerase (342 aa).

12–13 (RK) contacts substrate. Residues 71-73 (AMT), serine 101, and asparagine 129 contribute to the FMN site. Residue 101–103 (SQR) coordinates substrate. Glutamine 163 is a substrate binding site. Glutamate 164 is a Mg(2+) binding site. FMN is bound by residues lysine 195, threonine 225, 272–274 (GIR), and 293–294 (AR).

It belongs to the IPP isomerase type 2 family. As to quaternary structure, homooctamer. Dimer of tetramers. Requires FMN as cofactor. NADPH is required as a cofactor. Mg(2+) serves as cofactor.

It is found in the cytoplasm. It catalyses the reaction isopentenyl diphosphate = dimethylallyl diphosphate. Its function is as follows. Involved in the biosynthesis of isoprenoids. Catalyzes the 1,3-allylic rearrangement of the homoallylic substrate isopentenyl (IPP) to its allylic isomer, dimethylallyl diphosphate (DMAPP). This is Isopentenyl-diphosphate delta-isomerase from Mycolicibacterium gilvum (strain PYR-GCK) (Mycobacterium gilvum (strain PYR-GCK)).